We begin with the raw amino-acid sequence, 263 residues long: Ribosomal RNA small subunit methyltransferase J (263 aa).

Residues 115 to 116 (RD), 131 to 132 (ER), and aspartate 181 contribute to the S-adenosyl-L-methionine site.

Belongs to the methyltransferase superfamily. RsmJ family.

The protein localises to the cytoplasm. It carries out the reaction guanosine(1516) in 16S rRNA + S-adenosyl-L-methionine = N(2)-methylguanosine(1516) in 16S rRNA + S-adenosyl-L-homocysteine + H(+). Functionally, specifically methylates the guanosine in position 1516 of 16S rRNA. The chain is Ribosomal RNA small subunit methyltransferase J from Hahella chejuensis (strain KCTC 2396).